Reading from the N-terminus, the 143-residue chain is Hemoglobin subunit alpha-1 (143 aa).

N-acetylserine is present on serine 2. One can recognise a Globin domain in the interval 2–143 (SLSSKDKATV…LALALAEKYR (142 aa)). Histidine 60 is a binding site for O2. Histidine 89 contacts heme b.

Belongs to the globin family. In terms of assembly, hb 1 is a heterotetramer of two alpha-1 and two beta-1 chains. In terms of tissue distribution, red blood cells.

Functionally, involved in oxygen transport from gills to the various peripheral tissues. This is Hemoglobin subunit alpha-1 (hba1) from Arctogadus glacialis (Arctic cod).